The chain runs to 439 residues: tRNA-2-methylthio-N(6)-dimethylallyladenosine synthase (439 aa).

Residues Lys2–Gln119 form the MTTase N-terminal domain. The [4Fe-4S] cluster site is built by Cys11, Cys48, Cys82, Cys156, Cys160, and Cys163. One can recognise a Radical SAM core domain in the interval Arg142–Glu374. A TRAM domain is found at Gln377–Cys439.

The protein belongs to the methylthiotransferase family. MiaB subfamily. Monomer. [4Fe-4S] cluster serves as cofactor.

It localises to the cytoplasm. It carries out the reaction N(6)-dimethylallyladenosine(37) in tRNA + (sulfur carrier)-SH + AH2 + 2 S-adenosyl-L-methionine = 2-methylsulfanyl-N(6)-dimethylallyladenosine(37) in tRNA + (sulfur carrier)-H + 5'-deoxyadenosine + L-methionine + A + S-adenosyl-L-homocysteine + 2 H(+). Functionally, catalyzes the methylthiolation of N6-(dimethylallyl)adenosine (i(6)A), leading to the formation of 2-methylthio-N6-(dimethylallyl)adenosine (ms(2)i(6)A) at position 37 in tRNAs that read codons beginning with uridine. In Coxiella burnetii (strain CbuK_Q154) (Coxiella burnetii (strain Q154)), this protein is tRNA-2-methylthio-N(6)-dimethylallyladenosine synthase.